The following is a 169-amino-acid chain: Lipoprotein signal peptidase (169 aa).

The next 3 helical transmembrane spans lie at 1–21 (MPES…LILV), 68–88 (WQRW…VVWL), and 94–114 (HETL…GNLY). Residues D124 and D143 contribute to the active site. The helical transmembrane segment at 135-155 (FFPAFNLADTFITIGAILLAL) threads the bilayer.

This sequence belongs to the peptidase A8 family.

The protein localises to the cell inner membrane. It carries out the reaction Release of signal peptides from bacterial membrane prolipoproteins. Hydrolyzes -Xaa-Yaa-Zaa-|-(S,diacylglyceryl)Cys-, in which Xaa is hydrophobic (preferably Leu), and Yaa (Ala or Ser) and Zaa (Gly or Ala) have small, neutral side chains.. The protein operates within protein modification; lipoprotein biosynthesis (signal peptide cleavage). This protein specifically catalyzes the removal of signal peptides from prolipoproteins. This is Lipoprotein signal peptidase from Ectopseudomonas mendocina (strain ymp) (Pseudomonas mendocina).